The sequence spans 236 residues: uncharacterized protein (236 aa).

Residues 1 to 23 form the signal peptide; sequence MRRILSILVFAIMLAGCSSNAST. Residues 22-62 form a disordered region; the sequence is STEKQHAGGEKTVKAEPQSTSSQKDSTDDYQPNSQVTDDRT. Residues 24-35 are compositionally biased toward basic and acidic residues; the sequence is EKQHAGGEKTVK.

This is an uncharacterized protein from Bacillus subtilis (strain 168).